A 426-amino-acid polypeptide reads, in one-letter code: Phosphomethylpyrimidine synthase (426 aa).

Substrate contacts are provided by residues Asn-65, Met-94, Tyr-123, His-162, 184 to 186, 225 to 228, and Glu-264; these read SRG and DGMR. Residue His-268 coordinates Zn(2+). Tyr-291 contributes to the substrate binding site. His-332 lines the Zn(2+) pocket. Cys-408, Cys-411, and Cys-415 together coordinate [4Fe-4S] cluster.

It belongs to the ThiC family. It depends on [4Fe-4S] cluster as a cofactor.

The catalysed reaction is 5-amino-1-(5-phospho-beta-D-ribosyl)imidazole + S-adenosyl-L-methionine = 4-amino-2-methyl-5-(phosphooxymethyl)pyrimidine + CO + 5'-deoxyadenosine + formate + L-methionine + 3 H(+). The protein operates within cofactor biosynthesis; thiamine diphosphate biosynthesis. Catalyzes the synthesis of the hydroxymethylpyrimidine phosphate (HMP-P) moiety of thiamine from aminoimidazole ribotide (AIR) in a radical S-adenosyl-L-methionine (SAM)-dependent reaction. The chain is Phosphomethylpyrimidine synthase from Methanococcus maripaludis (strain C6 / ATCC BAA-1332).